Consider the following 268-residue polypeptide: Phosphate import ATP-binding protein PstB 2 (268 aa).

The region spanning Met22–Ile263 is the ABC transporter domain. Gly54–Ser61 contributes to the ATP binding site.

The protein belongs to the ABC transporter superfamily. Phosphate importer (TC 3.A.1.7) family. As to quaternary structure, the complex is composed of two ATP-binding proteins (PstB), two transmembrane proteins (PstC and PstA) and a solute-binding protein (PstS).

It localises to the cell inner membrane. It catalyses the reaction phosphate(out) + ATP + H2O = ADP + 2 phosphate(in) + H(+). Functionally, part of the ABC transporter complex PstSACB involved in phosphate import. Responsible for energy coupling to the transport system. This is Phosphate import ATP-binding protein PstB 2 from Rhizobium johnstonii (strain DSM 114642 / LMG 32736 / 3841) (Rhizobium leguminosarum bv. viciae).